The following is a 592-amino-acid chain: Protein alan shepard (592 aa).

The disordered stretch occupies residues 1 to 68; sequence MGGPHHQHQQ…ASVAAAPPTP (68 aa). Residues 18-28 are compositionally biased toward gly residues; it reads VGGGNGHGGGA. Polar residues predominate over residues 36-54; it reads PNSQQLPPQMPRSQNYANG. The span at 55–64 shows a compositional bias: low complexity; sequence SSSAASVAAA. Phosphotyrosine is present on residues Y124 and Y140. The interval 162 to 224 is disordered; that stretch reads PATTTYGQRV…AQNQNQQGGE (63 aa). Over residues 176–224 the composition is skewed to low complexity; it reads SPSNTNSSSSSNTGSQSGTLSTSLSNTTNTNTTMGPNGTAQNQNQQGGE. RRM domains are found at residues 229 to 307 and 319 to 398; these read TNLY…IWVL and TNLY…FADG. Residues 565-592 form a disordered region; sequence PMTDSEQASTAASPDEAYTQYPHQAAPK.

Has a role in the perception of gravity. In Drosophila mojavensis (Fruit fly), this protein is Protein alan shepard.